The following is a 252-amino-acid chain: 5'-nucleotidase SurE (252 aa).

Aspartate 8, aspartate 9, serine 42, and asparagine 94 together coordinate a divalent metal cation.

This sequence belongs to the SurE nucleotidase family. The cofactor is a divalent metal cation.

Its subcellular location is the cytoplasm. The enzyme catalyses a ribonucleoside 5'-phosphate + H2O = a ribonucleoside + phosphate. In terms of biological role, nucleotidase that shows phosphatase activity on nucleoside 5'-monophosphates. The chain is 5'-nucleotidase SurE from Ehrlichia ruminantium (strain Welgevonden).